A 351-amino-acid chain; its full sequence is MTILSDVKALGQQIWLDNLSRSLVQSGELAQMLKQGVCGVTSNPAIFQKAFAGDALYADEVAALKRQNLSPKQRYETMAVADVRAACDVCLAEHESTGGKTGFVSLEVSPELAKDAQGTVEEARRLHAAIARKNAMIKVPATDAGIDALETLVSDGISVNLTLLFSRAQTLKAYAAYARGIAKRLAAGQSVAHIQVVASFFISRVDSALDATLPDRLKGKTAIALAKAAYQDWEQYFTAPEFAALEAQGANRVQLLWASTGVKNPAYPDTLYVDSLIGVHTVNTVPDATLKAFIDHGTAKATLTESADEARARLAEIAALGIDVETLAARLQEDGLKQFEEAFEKLLAPLV.

Residue Lys138 is the Schiff-base intermediate with substrate of the active site.

Belongs to the transaldolase family. Type 2 subfamily.

It is found in the cytoplasm. It carries out the reaction D-sedoheptulose 7-phosphate + D-glyceraldehyde 3-phosphate = D-erythrose 4-phosphate + beta-D-fructose 6-phosphate. It participates in carbohydrate degradation; pentose phosphate pathway; D-glyceraldehyde 3-phosphate and beta-D-fructose 6-phosphate from D-ribose 5-phosphate and D-xylulose 5-phosphate (non-oxidative stage): step 2/3. In terms of biological role, transaldolase is important for the balance of metabolites in the pentose-phosphate pathway. The sequence is that of Transaldolase from Neisseria gonorrhoeae (strain ATCC 700825 / FA 1090).